We begin with the raw amino-acid sequence, 532 residues long: Hepatocyte nuclear factor 1-beta-B (532 aa).

The interval 1-35 is dimerization; it reads MFTDMVSKLTSLQQELLSALLDSGVTKDVLVQALE. The 32-residue stretch at 5–36 folds into the HNF-p1 domain; the sequence is MVSKLTSLQQELLSALLDSGVTKDVLVQALED. The tract at residues 74 to 95 is disordered; sequence TGAQGKGGKLSGDEGSEDGDDF. The region spanning 102 to 197 is the POU-specific atypical domain; it reads RELQSLNTEE…IDRQFDRVQG (96 aa). The segment covering 222-231 has biased composition (gly residues); sequence SSGAAGGSGA. Disordered regions lie at residues 222–245 and 500–532; these read SSGAAGGSGAAVGDEGEPGSKRMR and EAGQFSHPSRYSTMDSSTITHLGSSKQCPLQAW. A DNA-binding region (homeobox; HNF1-type) is located at residues 244–324; the sequence is MRRNRFKWGP…NRRKEEAFRQ (81 aa). Residues 505-532 show a composition bias toward polar residues; it reads SHPSRYSTMDSSTITHLGSSKQCPLQAW.

This sequence belongs to the HNF1 homeobox family. As to quaternary structure, binds DNA as a dimer. Can form homodimer or heterodimer with HNF1-alpha. First expressed at stage 10 in the intermediate mesoderm. Expressed in rhombomere r5 by 14 hpf with expression diminishing by 18 hpf.

It localises to the nucleus. Its function is as follows. Transcription factor that binds to the inverted palindrome 5'-GTTAATNATTAAC-3'. Acts downstream of hnf1ba but is not required for induction of rhombomere r5/r6 gene expression in the hindbrain. In Danio rerio (Zebrafish), this protein is Hepatocyte nuclear factor 1-beta-B.